Here is a 301-residue protein sequence, read N- to C-terminus: Acetylglutamate kinase (301 aa).

Substrate is bound by residues 71 to 72 (GG), R93, and N198.

Belongs to the acetylglutamate kinase family. ArgB subfamily.

Its subcellular location is the cytoplasm. It catalyses the reaction N-acetyl-L-glutamate + ATP = N-acetyl-L-glutamyl 5-phosphate + ADP. Its pathway is amino-acid biosynthesis; L-arginine biosynthesis; N(2)-acetyl-L-ornithine from L-glutamate: step 2/4. Its function is as follows. Catalyzes the ATP-dependent phosphorylation of N-acetyl-L-glutamate. The sequence is that of Acetylglutamate kinase from Rhizorhabdus wittichii (strain DSM 6014 / CCUG 31198 / JCM 15750 / NBRC 105917 / EY 4224 / RW1) (Sphingomonas wittichii).